A 180-amino-acid polypeptide reads, in one-letter code: Small ribosomal subunit protein uS4 (180 aa).

In terms of domain architecture, S4 RNA-binding spans 103–165; it reads RRLQTIVYRK…KGSPFAKEGH (63 aa).

This sequence belongs to the universal ribosomal protein uS4 family. In terms of assembly, part of the 30S ribosomal subunit. Contacts protein S5. The interaction surface between S4 and S5 is involved in control of translational fidelity.

Its function is as follows. One of the primary rRNA binding proteins, it binds directly to 16S rRNA where it nucleates assembly of the body of the 30S subunit. In terms of biological role, with S5 and S12 plays an important role in translational accuracy. The chain is Small ribosomal subunit protein uS4 from Thermococcus kodakarensis (strain ATCC BAA-918 / JCM 12380 / KOD1) (Pyrococcus kodakaraensis (strain KOD1)).